The chain runs to 471 residues: Adenosylhomocysteinase (471 aa).

Residues T60, D135, and E196 each coordinate substrate. An NAD(+)-binding site is contributed by T197–T199. 2 residues coordinate substrate: K226 and D230. NAD(+) is bound by residues N231, G260–G265, E283, N318, I339–H341, and N387.

This sequence belongs to the adenosylhomocysteinase family. It depends on NAD(+) as a cofactor.

The protein resides in the cytoplasm. The enzyme catalyses S-adenosyl-L-homocysteine + H2O = L-homocysteine + adenosine. Its pathway is amino-acid biosynthesis; L-homocysteine biosynthesis; L-homocysteine from S-adenosyl-L-homocysteine: step 1/1. Functionally, may play a key role in the regulation of the intracellular concentration of adenosylhomocysteine. The chain is Adenosylhomocysteinase from Chlorobium luteolum (strain DSM 273 / BCRC 81028 / 2530) (Pelodictyon luteolum).